The sequence spans 452 residues: Probable V-type proton ATPase subunit H (452 aa).

This sequence belongs to the V-ATPase H subunit family. In terms of assembly, V-ATPase is a heteromultimeric enzyme composed of a peripheral catalytic V1 complex (components A to H) attached to an integral membrane V0 proton pore complex (components: a, c, c', c'' and d).

Functionally, subunit of the peripheral V1 complex of vacuolar ATPase. Subunit H activates the ATPase activity of the enzyme and couples ATPase activity to proton flow. Vacuolar ATPase is responsible for acidifying a variety of intracellular compartments in eukaryotic cells, thus providing most of the energy required for transport processes in the vacuolar system. The sequence is that of Probable V-type proton ATPase subunit H from Oryza sativa subsp. japonica (Rice).